The sequence spans 106 residues: Large ribosomal subunit protein bL21 (106 aa).

It belongs to the bacterial ribosomal protein bL21 family. Part of the 50S ribosomal subunit. Contacts protein L20.

This protein binds to 23S rRNA in the presence of protein L20. In Coprothermobacter proteolyticus (strain ATCC 35245 / DSM 5265 / OCM 4 / BT), this protein is Large ribosomal subunit protein bL21.